The following is a 202-amino-acid chain: Translation initiation factor IF-3 (202 aa).

The protein belongs to the IF-3 family. As to quaternary structure, monomer.

It is found in the cytoplasm. Functionally, IF-3 binds to the 30S ribosomal subunit and shifts the equilibrium between 70S ribosomes and their 50S and 30S subunits in favor of the free subunits, thus enhancing the availability of 30S subunits on which protein synthesis initiation begins. This is Translation initiation factor IF-3 from Prochlorococcus marinus (strain NATL2A).